The primary structure comprises 218 residues: Small ribosomal subunit protein uS5 (218 aa).

The segment covering 1 to 10 has biased composition (polar residues); the sequence is MTQATNQTPG. The segment at 1 to 63 is disordered; that stretch reads MTQATNQTPG…GRDERDSEWQ (63 aa). The segment covering 11–25 has biased composition (low complexity); it reads QDVPGAADVPAAAEG. The segment covering 31 to 63 has biased composition (basic and acidic residues); it reads GERRGGGGGRGGDRRGRGDRRGRGRDERDSEWQ. The region spanning 62-125 is the S5 DRBM domain; the sequence is WQERVIQIRR…ADGKKHLVKV (64 aa).

It belongs to the universal ribosomal protein uS5 family. In terms of assembly, part of the 30S ribosomal subunit. Contacts proteins S4 and S8.

Its function is as follows. With S4 and S12 plays an important role in translational accuracy. Located at the back of the 30S subunit body where it stabilizes the conformation of the head with respect to the body. This chain is Small ribosomal subunit protein uS5, found in Synechococcus sp. (strain RCC307).